A 283-amino-acid chain; its full sequence is Pantothenate synthetase (283 aa).

ATP is bound at residue 34 to 41; that stretch reads MGALHDGH. Residue H41 is the Proton donor of the active site. Q65 contributes to the (R)-pantoate binding site. Beta-alanine is bound at residue Q65. 152 to 155 serves as a coordination point for ATP; sequence GEKD. Residue Q158 coordinates (R)-pantoate. Residues V181 and 189-192 each bind ATP; that span reads MSSR.

This sequence belongs to the pantothenate synthetase family. In terms of assembly, homodimer.

It localises to the cytoplasm. The catalysed reaction is (R)-pantoate + beta-alanine + ATP = (R)-pantothenate + AMP + diphosphate + H(+). It participates in cofactor biosynthesis; (R)-pantothenate biosynthesis; (R)-pantothenate from (R)-pantoate and beta-alanine: step 1/1. Its function is as follows. Catalyzes the condensation of pantoate with beta-alanine in an ATP-dependent reaction via a pantoyl-adenylate intermediate. The sequence is that of Pantothenate synthetase from Rhodopseudomonas palustris (strain BisB18).